The following is a 22-amino-acid chain: GMATKAGTALGKVAKAVIGAAL.

Leu22 is subject to Leucine amide.

In terms of tissue distribution, skin.

The protein resides in the secreted. In terms of biological role, has very strong antimicrobial activity against Gram-positive bacterium S.aureus, Gram-negative bacterium E.coli and yeast C.albicans. Has strong hemolytic activity against human red blood cells. The polypeptide is Antimicrobial peptide 5 (Xenopus tropicalis (Western clawed frog)).